The primary structure comprises 328 residues: Cell division protein ZipA (328 aa).

Residues 1–4 lie on the Periplasmic side of the membrane; that stretch reads MDLN. Residues 5–25 form a helical membrane-spanning segment; it reads TILIIVGIVALVALIVHGLWS. The Cytoplasmic portion of the chain corresponds to 26–328; sequence NRREKSKYFD…NAEQAYLARV (303 aa). Residues 44–82 are disordered; sequence SLTSRSHTQEEMVQPNNISPNTYVENGHTPISQPTTEKL. Residues 57-81 show a composition bias toward polar residues; the sequence is QPNNISPNTYVENGHTPISQPTTEK.

The protein belongs to the ZipA family. As to quaternary structure, interacts with FtsZ via their C-terminal domains.

It is found in the cell inner membrane. Essential cell division protein that stabilizes the FtsZ protofilaments by cross-linking them and that serves as a cytoplasmic membrane anchor for the Z ring. Also required for the recruitment to the septal ring of downstream cell division proteins. The sequence is that of Cell division protein ZipA from Haemophilus influenzae (strain PittGG).